The chain runs to 469 residues: Serine hydroxymethyltransferase, cytosolic (469 aa).

N6-(pyridoxal phosphate)lysine is present on Lys248.

This sequence belongs to the SHMT family. In terms of assembly, homotetramer. Pyridoxal 5'-phosphate serves as cofactor.

The protein resides in the cytoplasm. The enzyme catalyses (6R)-5,10-methylene-5,6,7,8-tetrahydrofolate + glycine + H2O = (6S)-5,6,7,8-tetrahydrofolate + L-serine. It participates in one-carbon metabolism; tetrahydrofolate interconversion. Interconversion of serine and glycine. The sequence is that of Serine hydroxymethyltransferase, cytosolic (SHM2) from Candida glabrata (strain ATCC 2001 / BCRC 20586 / JCM 3761 / NBRC 0622 / NRRL Y-65 / CBS 138) (Yeast).